Reading from the N-terminus, the 472-residue chain is Mixed lineage kinase domain-like protein (472 aa).

Residues methionine 1–aspartate 143 are N-terminal bundle and brace (NBB); mediates INSP6 binding. Positions leucine 61–lysine 81 form a coiled coil. A Phosphoserine modification is found at serine 124. Residues glutamine 138 to valine 229 are a coiled coil. A Protein kinase domain is found at glycine 192–arginine 456. ATP contacts are provided by residues leucine 198–isoleucine 206 and lysine 219. Phosphoserine; by RIPK3 occurs at positions 345 and 347. Position 349 is a phosphothreonine; by RIPK3 (threonine 349). At serine 352 the chain carries Phosphoserine; by RIPK3.

The protein belongs to the protein kinase superfamily. Homooligomer. Homotrimer; forms homotrimers on necroptosis induction. Upon TNF-induced necrosis, forms in complex with PGAM5, RIPK1 and RIPK3. Within this complex, may play a role in the proper targeting of RIPK1-RIPK3 to its downstream effector PGAM5. Interacts with RIPK3; the interaction is direct and promotes its phosphorylation and subsequent activation. Phosphorylation by RIPK3 induces a conformational switch that is required for necroptosis. It also induces homotrimerization and localization to the plasma membrane. As to expression, highly expressed in thymus, colon, intestine, liver, spleen and lung. Expressed at much lower level in skeletal muscle, heart and kidney. Not detected in brain.

It localises to the cytoplasm. The protein localises to the cell membrane. Its subcellular location is the nucleus. Its activity is regulated as follows. Activated via binding to highly phosphorylated inositol phosphates such as inositolhexakisphosphate (InsP6) which mediates the release of an N-terminal auto-inhibitory region. Activation requires not only RIPK3-dependent phosphorylation but also binding to highly phosphorylated inositol phosphates. Functionally, pseudokinase that plays a key role in TNF-induced necroptosis, a programmed cell death process. Does not have protein kinase activity. Activated following phosphorylation by RIPK3, leading to homotrimerization, localization to the plasma membrane and execution of programmed necrosis characterized by calcium influx and plasma membrane damage. In addition to TNF-induced necroptosis, necroptosis can also take place in the nucleus in response to orthomyxoviruses infection: following ZBP1 activation, which senses double-stranded Z-RNA structures, nuclear RIPK3 catalyzes phosphorylation and activation of MLKL, promoting disruption of the nuclear envelope and leakage of cellular DNA into the cytosol. Binds to highly phosphorylated inositol phosphates such as inositolhexakisphosphate (InsP6) which is essential for its necroptotic function. In Mus musculus (Mouse), this protein is Mixed lineage kinase domain-like protein.